The sequence spans 179 residues: Large ribosomal subunit protein uL5 (179 aa).

Belongs to the universal ribosomal protein uL5 family. As to quaternary structure, part of the 50S ribosomal subunit; part of the 5S rRNA/L5/L18/L25 subcomplex. Contacts the 5S rRNA and the P site tRNA. Forms a bridge to the 30S subunit in the 70S ribosome.

This is one of the proteins that bind and probably mediate the attachment of the 5S RNA into the large ribosomal subunit, where it forms part of the central protuberance. In the 70S ribosome it contacts protein S13 of the 30S subunit (bridge B1b), connecting the 2 subunits; this bridge is implicated in subunit movement. Contacts the P site tRNA; the 5S rRNA and some of its associated proteins might help stabilize positioning of ribosome-bound tRNAs. The polypeptide is Large ribosomal subunit protein uL5 (Nitrosomonas eutropha (strain DSM 101675 / C91 / Nm57)).